A 544-amino-acid polypeptide reads, in one-letter code: Formate--tetrahydrofolate ligase (544 aa).

An ATP-binding site is contributed by 63-70; that stretch reads TPAGEGKS.

Belongs to the formate--tetrahydrofolate ligase family.

The catalysed reaction is (6S)-5,6,7,8-tetrahydrofolate + formate + ATP = (6R)-10-formyltetrahydrofolate + ADP + phosphate. It functions in the pathway one-carbon metabolism; tetrahydrofolate interconversion. This chain is Formate--tetrahydrofolate ligase, found in Fusobacterium nucleatum subsp. nucleatum (strain ATCC 25586 / DSM 15643 / BCRC 10681 / CIP 101130 / JCM 8532 / KCTC 2640 / LMG 13131 / VPI 4355).